The following is a 358-amino-acid chain: Alanine racemase (358 aa).

Lysine 35 serves as the catalytic Proton acceptor; specific for D-alanine. Position 35 is an N6-(pyridoxal phosphate)lysine (lysine 35). Position 130 (arginine 130) interacts with substrate. The Proton acceptor; specific for L-alanine role is filled by tyrosine 255. Residue methionine 303 coordinates substrate.

This sequence belongs to the alanine racemase family. Pyridoxal 5'-phosphate serves as cofactor.

The enzyme catalyses L-alanine = D-alanine. It participates in amino-acid biosynthesis; D-alanine biosynthesis; D-alanine from L-alanine: step 1/1. Its function is as follows. Catalyzes the interconversion of L-alanine and D-alanine. May also act on other amino acids. In Shewanella sp. (strain ANA-3), this protein is Alanine racemase (alr).